A 306-amino-acid chain; its full sequence is Serine/threonine-protein phosphatase PP2A-1 catalytic subunit (306 aa).

Mn(2+) is bound by residues Asp-54, His-56, Asp-82, and Asn-114. The active-site Proton donor is His-115. Mn(2+) contacts are provided by His-164 and His-238. The residue at position 306 (Leu-306) is a Leucine methyl ester.

It belongs to the PPP phosphatase family. PP-2A subfamily. As to quaternary structure, PP2A consists of a common heterodimeric core enzyme, composed of a 36 kDa catalytic subunit (subunit C) and a 65 kDa constant regulatory subunit (subunit A), that associates with a variety of regulatory subunits such as subunits B (the R2/B/PR55/B55, R3/B''/PR72/PR130/PR59 and R5/B'/B56 families). Interacts with TAF12B. Interacts with SRK2E/OST1. Interacts with TAP46. Requires Mn(2+) as cofactor. Post-translationally, reversibly methyl esterified on Leu-306 by leucine carboxyl methyltransferase 1 (LCMT1) and pectin methylesterase 1 (PME1). Carboxyl methylation influences the affinity of the catalytic subunit for the different regulatory subunits, thereby modulating the PP2A holoenzyme's substrate specificity, enzyme activity and cellular localization. In terms of processing, phosphorylation of either threonine (by autophosphorylation-activated protein kinase) or tyrosine results in inactivation of the phosphatase. Auto-dephosphorylation has been suggested as a mechanism for reactivation.

Its subcellular location is the cytoplasm. The catalysed reaction is O-phospho-L-seryl-[protein] + H2O = L-seryl-[protein] + phosphate. It catalyses the reaction O-phospho-L-threonyl-[protein] + H2O = L-threonyl-[protein] + phosphate. The protein is Serine/threonine-protein phosphatase PP2A-1 catalytic subunit of Arabidopsis thaliana (Mouse-ear cress).